The chain runs to 127 residues: Holo-[acyl-carrier-protein] synthase (127 aa).

Positions 8 and 60 each coordinate Mg(2+).

Belongs to the P-Pant transferase superfamily. AcpS family. Mg(2+) is required as a cofactor.

The protein resides in the cytoplasm. It carries out the reaction apo-[ACP] + CoA = holo-[ACP] + adenosine 3',5'-bisphosphate + H(+). Functionally, transfers the 4'-phosphopantetheine moiety from coenzyme A to a Ser of acyl-carrier-protein. The chain is Holo-[acyl-carrier-protein] synthase from Marinomonas sp. (strain MWYL1).